A 69-amino-acid polypeptide reads, in one-letter code: Bacteriocin microcin B17 (69 aa).

The propeptide occupies 1 to 26 (MELKASEFGVVLSVDALKLSRQSPLG). The segment at residues 39 to 40 (GS) is a cross-link (oxazole-4-carboxylic acid (Gly-Ser)). The segment at residues 40-41 (SC) is a cross-link (thiazole-4-carboxylic acid (Ser-Cys)). 3 consecutive cross-links (thiazole-4-carboxylic acid (Gly-Cys)) follow at residues 47–48 (GC), 50–51 (GC), and 54–55 (GC). A cross-link (oxazole-4-carboxylic acid (Cys-Ser)) is located at residues 55-56 (CS). 2 consecutive cross-links (oxazole-4-carboxylic acid (Gly-Ser)) follow at residues 61-62 (GS) and 64-65 (GS).

The processed N-terminus does not resemble a typical secretion signal sequence. Post-translationally, maturation of thiazole and oxazole containing antibiotics involves the enzymatic condensation of a Cys, Ser or Thr with the alpha-carbonyl of the preceding amino acid to form a thioether or ether bond, then dehydration to form a double bond with the alpha-amino nitrogen. Thiazoline or oxazoline rings are dehydrogenated to form thiazole or oxazole rings.

Its function is as follows. This glycine-rich peptide antibiotic inhibits DNA replication in many enteric bacteria, that leads to induction of the SOS repair system, massive DNA degradation and cell death. B17 inhibits type II topoisomerase by trapping an enzyme - DNA cleavable complex. The polypeptide is Bacteriocin microcin B17 (mcbA) (Escherichia coli).